The primary structure comprises 655 residues: Integrin beta-5 (655 aa).

The VWFA domain maps to 1–234 (DLSLSMKDDL…QLIINAYNSI (234 aa)). Residues 1–575 (DLSLSMKDDL…REPECGNTPN (575 aa)) lie on the Extracellular side of the membrane. Mg(2+) contacts are provided by S3 and S5. The Ca(2+) site is built by S5, D8, D9, and D40. A disulfide bond links C58 and C67. Ca(2+)-binding residues include N98, D100, P102, and E103. E103 contributes to the Mg(2+) binding site. Cysteines 115 and 156 form a disulfide. A glycan (N-linked (GlcNAc...) asparagine) is linked at N203. Residue G218 participates in Ca(2+) binding. 13 cysteine pairs are disulfide-bonded: C257–C269, C289–C317, C321–C340, C332–C343, C345–C354, C356–C386, C369–C384, C378–C389, C391–C404, C406–C427, C411–C425, C419–C430, and C432–C441. N316 carries N-linked (GlcNAc...) asparagine glycosylation. I-EGF domains follow at residues 321–355 (CSVG…TRCE), 356–405 (CQDG…PFCE), 406–442 (CDNF…DNCN), and 443–482 (CSTD…EMCE). An N-linked (GlcNAc...) asparagine glycan is attached at N408. A glycan (N-linked (GlcNAc...) asparagine) is linked at N442. Disulfide bonds link C443–C466, C450–C464, C458–C469, C471–C481, C484–C487, C491–C538, C497–C517, C500–C513, and C546–C570. N-linked (GlcNAc...) asparagine glycans are attached at residues N510 and N561. A helical transmembrane segment spans residues 576 to 598 (AMTILLAVVGSILLVGLALLAIW). The Cytoplasmic segment spans residues 599–655 (KLLVTIHDRREFAKFQSERSRARYEMASNPLYRKPISTHTVDFTFNKFNKSYNGTVD). S626 bears the Phosphoserine mark.

It belongs to the integrin beta chain family. As to quaternary structure, heterodimer of an alpha and a beta subunit. Beta-5 (ITGB5) associates with alpha-V (ITGAV). Interacts with MYO10. Interacts with DAB2. Integrin ITGAV:ITGB5 interacts with FBLN5 (via N-terminus). ITGAV:ITGB5 interacts with CCN3. Interacts with tensin TNS3; TNS3 also interacts with PEAK1, thus acting as an adapter molecule to bridge the association of PEAK1 with ITGB5.

Its subcellular location is the cell membrane. In terms of biological role, integrin alpha-V/beta-5 (ITGAV:ITGB5) is a receptor for fibronectin. It recognizes the sequence R-G-D in its ligand. The protein is Integrin beta-5 (ITGB5) of Papio cynocephalus (Yellow baboon).